A 149-amino-acid polypeptide reads, in one-letter code: MQVILLDKVANLGSLGDQVNVKAGYARNFLVPKGKAVPATKKNVEYFEARRAELEAKLADVLAAANARAEKINALETVTIASKAGDEGKLFGSIGTRDIADAVTAAGVDVAKSEVRLPNGVLRTTGEHEVNFQVHSEVFAKVIINVVAE.

It belongs to the bacterial ribosomal protein bL9 family.

Functionally, binds to the 23S rRNA. In Salmonella dublin (strain CT_02021853), this protein is Large ribosomal subunit protein bL9.